A 359-amino-acid polypeptide reads, in one-letter code: Acidic skeletal organic matrix protein (359 aa).

The signal sequence occupies residues 1–26; that stretch reads MLAPRLAFVLLLSSYFGSILITSVES. 2 disordered regions span residues 60 to 83 and 224 to 254; these read FEEDDDDDDDEDNEESENEVEDFD and SEAEDPEEVDDAKRAETGKDPICVDPDDPNE. Residues 66–89 are a coiled coil; that stretch reads DDDDEDNEESENEVEDFDDENALS.

In terms of tissue distribution, component of the acid-insoluble and acid-soluble organic matrix of the aragonitic skeleton (at protein level).

The protein localises to the secreted. This is Acidic skeletal organic matrix protein from Acropora millepora (Staghorn coral).